The sequence spans 113 residues: N-alpha-acetyltransferase 38-A, NatC auxiliary subunit (113 aa).

A disordered region spans residues 1–29 (MAAVLEENGCSRQSSPSAGDSDAEPGDTA). Positions 28-106 (TARHKLESLL…IVSIQVELES (79 aa)) constitute a Sm domain.

Belongs to the snRNP Sm proteins family. As to quaternary structure, component of the N-terminal acetyltransferase C (NatC) complex, which is composed of naa35, naa38 and naa30.

It is found in the cytoplasm. In terms of biological role, auxillary component of the N-terminal acetyltransferase C (NatC) complex which catalyzes acetylation of N-terminal methionine residues. In Xenopus laevis (African clawed frog), this protein is N-alpha-acetyltransferase 38-A, NatC auxiliary subunit (naa38-a).